Consider the following 185-residue polypeptide: Ribosome-recycling factor (185 aa).

The protein belongs to the RRF family.

The protein localises to the cytoplasm. Responsible for the release of ribosomes from messenger RNA at the termination of protein biosynthesis. May increase the efficiency of translation by recycling ribosomes from one round of translation to another. The protein is Ribosome-recycling factor of Xylella fastidiosa (strain 9a5c).